The sequence spans 494 residues: Probable cytosol aminopeptidase (494 aa).

Residues K260 and D265 each contribute to the Mn(2+) site. K272 is a catalytic residue. D283, D342, and E344 together coordinate Mn(2+). The active site involves R346.

It belongs to the peptidase M17 family. It depends on Mn(2+) as a cofactor.

It localises to the cytoplasm. The enzyme catalyses Release of an N-terminal amino acid, Xaa-|-Yaa-, in which Xaa is preferably Leu, but may be other amino acids including Pro although not Arg or Lys, and Yaa may be Pro. Amino acid amides and methyl esters are also readily hydrolyzed, but rates on arylamides are exceedingly low.. It carries out the reaction Release of an N-terminal amino acid, preferentially leucine, but not glutamic or aspartic acids.. In terms of biological role, presumably involved in the processing and regular turnover of intracellular proteins. Catalyzes the removal of unsubstituted N-terminal amino acids from various peptides. This is Probable cytosol aminopeptidase from Bacillus cereus (strain ATCC 10987 / NRS 248).